Here is a 95-residue protein sequence, read N- to C-terminus: UPF0512 protein H (95 aa).

The protein belongs to the UPF0512 family.

The protein is UPF0512 protein H of Dictyostelium discoideum (Social amoeba).